The sequence spans 190 residues: Elongation factor P-like protein (190 aa).

It belongs to the elongation factor P family.

This Erwinia tasmaniensis (strain DSM 17950 / CFBP 7177 / CIP 109463 / NCPPB 4357 / Et1/99) protein is Elongation factor P-like protein.